Consider the following 479-residue polypeptide: Adenylate kinase 8 (479 aa).

2 adenylate kinase regions span residues 58–258 (PKVV…TYVQ) and 269–471 (PKVL…SGII). 67-72 (ASGKTT) provides a ligand contact to ATP. An NMP 1 region spans residues 87–113 (TKESLLEREFSRLSVEAKSYYQVYKKI). AMP is bound by residues 140–143 (GIPE), Gln-147, and Arg-203. Residues 177–206 (GKRIDPVTGEIYHTTFDWPPEPEIQNRLRQ) are LID 1. Position 278 to 283 (278 to 283 (GSGKRL)) interacts with ATP. An NMP 2 region spans residues 298-327 (SCGQLLKEAVAAKSSFGELIQPFFEKRMTV). AMP contacts are provided by residues 325–327 (MTV), 354–357 (GFPR), and Gln-361. Positions 391 to 424 (LRRTDPVTGERFHLMYKPPPTIEVQVRLLQNPKD) are LID 2. Residue Arg-392 participates in ATP binding.

It belongs to the adenylate kinase family. Interacts with CFAP45 and CFAP52; CFAP45 and AK8 dimerization may create a cavity at the interface of the dimer that can accommodate AMP.

It is found in the cytoplasm. The protein localises to the cytosol. It localises to the cytoskeleton. Its subcellular location is the cilium axoneme. It carries out the reaction AMP + ATP = 2 ADP. The enzyme catalyses a 2'-deoxyribonucleoside 5'-diphosphate + ATP = a 2'-deoxyribonucleoside 5'-triphosphate + ADP. It catalyses the reaction a ribonucleoside 5'-diphosphate + ATP = a ribonucleoside 5'-triphosphate + ADP. Its function is as follows. Nucleoside monophosphate (NMP) kinase that catalyzes the reversible transfer of the terminal phosphate group between nucleoside triphosphates and monophosphates. Has highest activity toward AMP, and weaker activity toward dAMP, CMP and dCMP. Also displays broad nucleoside diphosphate kinase activity. In Mus musculus (Mouse), this protein is Adenylate kinase 8 (Ak8).